Reading from the N-terminus, the 90-residue chain is RNA-binding protein Hfq (90 aa).

Positions 9–68 (DPFLNALRRERVPVSIYLVNGIKLQGQVESFDQFVILLKNTVSQMVYKHAISTVVPARPF) constitute a Sm domain.

Belongs to the Hfq family. Homohexamer.

Functionally, RNA chaperone that binds small regulatory RNA (sRNAs) and mRNAs to facilitate mRNA translational regulation in response to envelope stress, environmental stress and changes in metabolite concentrations. Also binds with high specificity to tRNAs. The chain is RNA-binding protein Hfq from Shewanella oneidensis (strain ATCC 700550 / JCM 31522 / CIP 106686 / LMG 19005 / NCIMB 14063 / MR-1).